We begin with the raw amino-acid sequence, 329 residues long: ARTTAPSVYPLVPGCSGTSGSLVTLGCLVKGYFPEPVTVKWNSGALSSGVHTFPAVLQSGLYTLSSSVTVPSSTWSSQTVTCSVAHPATKSNLIKRIEPRRPKPRPPTDICSCDDNLGRPSVFIFPPKPKDILMITLTPKVTCVVVDVSEEEPDVQFSWFVDNVRVFTAQTQPHEEQLNGTFRVVSTLHIQHQDWMSGKEFKCKVNNKDLPSPIEKTISKPRGKARTPQVYTIPPPREQMSKNKVSLTCMVTSFYPASISVEWERNGELEQDYKNTLPVLDSDESYFLYSKLSVDTDSWMRGDIYTCSVVHEALHNHHTQKNLSRSPGK.

The CH1 stretch occupies residues 1-97; the sequence is ARTTAPSVYP…ATKSNLIKRI (97 aa). A disulfide bridge connects residues Cys-27 and Cys-82. A hinge region spans residues 98–113; it reads EPRRPKPRPPTDICSC. The interval 114–222 is CH2; the sequence is DDNLGRPSVF…PIEKTISKPR (109 aa). Disulfide bonds link Cys-143/Cys-203 and Cys-249/Cys-307. The CH3 stretch occupies residues 223–329; sequence GKARTPQVYT…QKNLSRSPGK (107 aa).

The polypeptide is Ig gamma-2C chain C region (Rattus norvegicus (Rat)).